The chain runs to 150 residues: 15 kDa calcium-binding protein (150 aa).

Ala1 is subject to N-acetylalanine. EF-hand domains follow at residues 7 to 42 (TDAEKAEFKFGFKSKDGDNSITAKELGEFLESAGKS), 43 to 78 (FSEEQLAQMISDVDTDKSGTIEFSEMLMGIAEKMMK), 81 to 116 (WKKSHFQKAFDDMDKDGNGVLSPEELHLAMSTRIEP), and 118 to 150 (MSKEAIDAIIAKADCDGDGKINRKEFVKLIKSS). 18 residues coordinate Ca(2+): Asp22, Asp24, Ser26, Thr28, Asp56, Asp58, Ser60, Thr62, Glu67, Asp94, Asp96, Asn98, Glu105, Asp131, Asp133, Asp135, Lys137, and Glu142.

It localises to the nucleus. The protein localises to the cytoplasm. The protein resides in the cytoskeleton. Its subcellular location is the spindle. In terms of biological role, may play an important role in mitosis of sea urchin egg. May function as a Ca(2+)-dependent intracellular modulator of microtubule assembly. The sequence is that of 15 kDa calcium-binding protein from Hemicentrotus pulcherrimus (Sea urchin).